Consider the following 346-residue polypeptide: tRNA N6-adenosine threonylcarbamoyltransferase (346 aa).

Fe cation contacts are provided by His117 and His121. Residues 139 to 143 (QVSGG), Asp172, Gly185, Asp189, and Asn278 each bind substrate. Residue Asp308 participates in Fe cation binding.

This sequence belongs to the KAE1 / TsaD family. It depends on Fe(2+) as a cofactor.

The protein localises to the cytoplasm. It carries out the reaction L-threonylcarbamoyladenylate + adenosine(37) in tRNA = N(6)-L-threonylcarbamoyladenosine(37) in tRNA + AMP + H(+). Required for the formation of a threonylcarbamoyl group on adenosine at position 37 (t(6)A37) in tRNAs that read codons beginning with adenine. Is involved in the transfer of the threonylcarbamoyl moiety of threonylcarbamoyl-AMP (TC-AMP) to the N6 group of A37, together with TsaE and TsaB. TsaD likely plays a direct catalytic role in this reaction. The sequence is that of tRNA N6-adenosine threonylcarbamoyltransferase from Lactobacillus delbrueckii subsp. bulgaricus (strain ATCC 11842 / DSM 20081 / BCRC 10696 / JCM 1002 / NBRC 13953 / NCIMB 11778 / NCTC 12712 / WDCM 00102 / Lb 14).